A 732-amino-acid polypeptide reads, in one-letter code: Myosin heavy chain kinase B (732 aa).

The Alpha-type protein kinase domain maps to 124 to 328; that stretch reads DPYTTTAQWT…ICQYLNLQSI (205 aa). 298–303 serves as a coordination point for ATP; the sequence is GIGNLG. Residues 331 to 428 are disordered; that stretch reads KSEKSDCGTV…TNKERSKSKS (98 aa). Residues 356–394 are compositionally biased toward low complexity; that stretch reads NNNNNNNNNNNNNNNNNNSNNNNNNNSSISKSLVEISSG. Positions 395-404 are enriched in basic and acidic residues; it reads SKERNDRDSP. The span at 405–419 shows a compositional bias: polar residues; it reads SRQLFVSNDGNTLNT. 7 WD repeats span residues 458 to 486, 500 to 528, 540 to 568, 580 to 608, 620 to 648, 660 to 688, and 700 to 730; these read KGYHVTSHLCICDNLLFTGCSDNSIRVYD, GHEGPVESICYNDQYLFSGSSDHSIKVWD, GHDKPVHTVLLNDKYLFSGSSDKTIKVWD, SHARAVKTLCISGQYLFSGSNDKTIKVWD, GHTKWVTTICILGTNLYSGSYDKTIRVWN, GHDRWVEHMVICDKLLFTASDDNTIKIWD, and GHNATVQCLAVWEDKKCVISCSHDQSIRVWG.

The protein belongs to the protein kinase superfamily. Alpha-type protein kinase family. ALPK subfamily.

The catalysed reaction is L-threonyl-[myosin heavy-chain] + ATP = O-phospho-L-threonyl-[myosin heavy-chain] + ADP + H(+). Catalyzes its autophosphorylation, which is needed for enzymatic activity and phosphorylates myosin II heavy chain at a threonine in the C-terminal tail region. This phosphorylation is critical in regulating the assembly and disassembly of myosin II filament. Participates in control of myosin localization. The protein is Myosin heavy chain kinase B (mhkB) of Dictyostelium discoideum (Social amoeba).